A 241-amino-acid chain; its full sequence is Aspartate/glutamate leucyltransferase (241 aa).

It belongs to the R-transferase family. Bpt subfamily.

The protein localises to the cytoplasm. The catalysed reaction is N-terminal L-glutamyl-[protein] + L-leucyl-tRNA(Leu) = N-terminal L-leucyl-L-glutamyl-[protein] + tRNA(Leu) + H(+). It carries out the reaction N-terminal L-aspartyl-[protein] + L-leucyl-tRNA(Leu) = N-terminal L-leucyl-L-aspartyl-[protein] + tRNA(Leu) + H(+). Functions in the N-end rule pathway of protein degradation where it conjugates Leu from its aminoacyl-tRNA to the N-termini of proteins containing an N-terminal aspartate or glutamate. The protein is Aspartate/glutamate leucyltransferase of Helicobacter hepaticus (strain ATCC 51449 / 3B1).